The primary structure comprises 136 residues: Protein BUNDLE SHEATH DEFECTIVE 2, chloroplastic (136 aa).

Residues 1 to 56 (MANSLCFFSSPPTFCFQSPSKNPKPSHFFSTNDNTSSLVQKRELLQTSRSQSFEVK) constitute a chloroplast transit peptide. The segment at 62–133 (PQGTKPNSLV…AGFIGGFLST (72 aa)) adopts a CR-type zinc-finger fold. Residues cysteine 72, cysteine 75, glutamate 78, cysteine 80, cysteine 83, cysteine 86, cysteine 107, cysteine 110, glutamate 115, cysteine 118, and cysteine 121 each coordinate Zn(2+).

This sequence belongs to the BSD2 chaperone family. As to quaternary structure, interacts with the RuBisCo large subunit (RbcL) assembled as an intermediate complex made of eight RbcL and eight BSD2 subunits.

The protein resides in the plastid. The protein localises to the chloroplast stroma. Functionally, chloroplast chaperone required for RuBisCo biogenesis and translational regulation of the RuBisCo large subunit (RbcL). Stabilizes an end-state assembly intermediate of eight RbcL subunits until the small subunits (RBCSs) become available to produce a complete stable RuBisCo complex containing eight small and eight large subunits. The sequence is that of Protein BUNDLE SHEATH DEFECTIVE 2, chloroplastic from Arabidopsis thaliana (Mouse-ear cress).